The primary structure comprises 559 residues: Potassium-transporting ATPase potassium-binding subunit (559 aa).

13 helical membrane-spanning segments follow: residues 5–25 (GFLLIASFLLILLVLAKPLGS), 27–47 (LARLIAAVPLPGVAGVERILW), 63–83 (LLALLTLNLLGLGILFCLLFW), 132–152 (GLTVQNFLSAATGIAVVFALI), 170–190 (LVRITLWILFPVALIIALFFI), 253–273 (LAQMLAIFLIPAALCFAFGEA), 283–303 (LLWAMSFIFVVCVAVVMWAEV), 327–347 (FGVLASSLFAVVTTAASCGAV), 356–376 (ALGGMVPMWLMQIGEVVFGGV), 379–399 (GLYGMLLFVLLAVFIAGLMIG), 416–436 (MTALAILVTPMLVLLGSALAM), 484–504 (LLAFCMFVGRFGVIIPVMAIA), and 524–544 (GALFIGLLIGTVLLVGALTFI).

The protein belongs to the KdpA family. As to quaternary structure, the system is composed of three essential subunits: KdpA, KdpB and KdpC.

The protein resides in the cell inner membrane. Functionally, part of the high-affinity ATP-driven potassium transport (or Kdp) system, which catalyzes the hydrolysis of ATP coupled with the electrogenic transport of potassium into the cytoplasm. This subunit binds the periplasmic potassium ions and delivers the ions to the membrane domain of KdpB through an intramembrane tunnel. The polypeptide is Potassium-transporting ATPase potassium-binding subunit (Salmonella typhi).